We begin with the raw amino-acid sequence, 55 residues long: AVLYNSPNFGSRTSLSNGKNAAFAVVLLLSLLIYGSRCLSQRNHLCACGNNHSSH.

The helical transmembrane segment at 20-39 (NAAFAVVLLLSLLIYGSRCL) threads the bilayer.

This sequence belongs to the carlavirus/potexvirus TGB2 protein family.

It localises to the host membrane. In terms of biological role, the three proteins TGB1, TGB2 and TGB3 are required for virus movement. This chain is TGB2 protein, found in Potato virus X (strain Xc) (PVX).